We begin with the raw amino-acid sequence, 453 residues long: Homogentisate 1,2-dioxygenase (453 aa).

The active-site Proton acceptor is the histidine 304. The Fe cation site is built by histidine 347 and glutamate 353. Tyrosine 362 and histidine 383 together coordinate homogentisate. Histidine 383 is a binding site for Fe cation.

Belongs to the homogentisate dioxygenase family. Hexamer; dimer of trimers. Requires Fe cation as cofactor.

The enzyme catalyses homogentisate + O2 = 4-maleylacetoacetate + H(+). The protein operates within amino-acid degradation; L-phenylalanine degradation; acetoacetate and fumarate from L-phenylalanine: step 4/6. In terms of biological role, involved in the catabolism of homogentisate (2,5-dihydroxyphenylacetate or 2,5-OH-PhAc), a central intermediate in the degradation of phenylalanine and tyrosine. Catalyzes the oxidative ring cleavage of the aromatic ring of homogentisate to yield maleylacetoacetate. This chain is Homogentisate 1,2-dioxygenase, found in Sinorhizobium fredii (strain NBRC 101917 / NGR234).